Here is a 112-residue protein sequence, read N- to C-terminus: T cell receptor alpha variable 9-1 (112 aa).

The N-terminal stretch at 1 to 20 (MNSSPGPAIALFLMFGGING) is a signal peptide. Residues 21–112 (DSVVQTEGQV…DSAVYFCALS (92 aa)) form the Ig-like domain. A glycan (N-linked (GlcNAc...) asparagine) is linked at Asn41. Cysteines 42 and 109 form a disulfide.

As to quaternary structure, alpha-beta TR is a heterodimer composed of an alpha and beta chain; disulfide-linked. The alpha-beta TR is associated with the transmembrane signaling CD3 coreceptor proteins to form the TR-CD3 (TcR or TCR). The assembly of alpha-beta TR heterodimers with CD3 occurs in the endoplasmic reticulum where a single alpha-beta TR heterodimer associates with one CD3D-CD3E heterodimer, one CD3G-CD3E heterodimer and one CD247 homodimer forming a stable octameric structure. CD3D-CD3E and CD3G-CD3E heterodimers preferentially associate with TR alpha and TR beta chains, respectively. The association of the CD247 homodimer is the last step of TcR assembly in the endoplasmic reticulum and is required for transport to the cell surface.

The protein resides in the cell membrane. V region of the variable domain of T cell receptor (TR) alpha chain that participates in the antigen recognition. Alpha-beta T cell receptors are antigen specific receptors which are essential to the immune response and are present on the cell surface of T lymphocytes. Recognize peptide-major histocompatibility (MH) (pMH) complexes that are displayed by antigen presenting cells (APC), a prerequisite for efficient T cell adaptive immunity against pathogens. Binding of alpha-beta TR to pMH complex initiates TR-CD3 clustering on the cell surface and intracellular activation of LCK that phosphorylates the ITAM motifs of CD3G, CD3D, CD3E and CD247 enabling the recruitment of ZAP70. In turn ZAP70 phosphorylates LAT, which recruits numerous signaling molecules to form the LAT signalosome. The LAT signalosome propagates signal branching to three major signaling pathways, the calcium, the mitogen-activated protein kinase (MAPK) kinase and the nuclear factor NF-kappa-B (NF-kB) pathways, leading to the mobilization of transcription factors that are critical for gene expression and essential for T cell growth and differentiation. The T cell repertoire is generated in the thymus, by V-(D)-J rearrangement. This repertoire is then shaped by intrathymic selection events to generate a peripheral T cell pool of self-MH restricted, non-autoaggressive T cells. Post-thymic interaction of alpha-beta TR with the pMH complexes shapes TR structural and functional avidity. The sequence is that of T cell receptor alpha variable 9-1 from Homo sapiens (Human).